Consider the following 354-residue polypeptide: Annexin A13 (354 aa).

Annexin repeat units lie at residues 26–97 (NDPN…MLLT), 98–177 (DTDK…ALLQ), 203–275 (NLVE…LTLN), and 279–350 (NRPK…ALIG). Ca(2+) is bound by residues methionine 39, glycine 41, glycine 43, threonine 44, glutamate 46, glutamate 83, methionine 111, glycine 113, glycine 115, glutamate 118, aspartate 163, aspartate 265, methionine 292, glycine 294, leucine 295, glycine 296, and glutamate 336.

It belongs to the annexin family. In terms of assembly, homodimer.

The protein localises to the tegument. Its subcellular location is the secreted. It is found in the extracellular exosome. The protein resides in the host cell. Involved in reproduction of the worm. Involved in host-parasite interaction. Delivered into the host cell by means of parasite exosomes. Binds to acidic phospholipid membranes in a calcium-dependent manner in vitro. Causes aggregation of liposomes in the presence of calcium, but not in its absence. Likely to promote membrane fusion. May provide structural integrity within the tegument. The sequence is that of Annexin A13 from Schistosoma japonicum (Blood fluke).